The primary structure comprises 79 residues: Dolichyl-diphosphooligosaccharide--protein glycosyltransferase subunit TMEM258 (79 aa).

Position 1 is an N-acetylmethionine (Met-1). Residues 1-16 (MELEAMSRYTSPVNPA) are Lumenal-facing. A helical membrane pass occupies residues 17–37 (VFPHLTVVLLAIGMFFTAWFF). The Cytoplasmic portion of the chain corresponds to 38-54 (VYEVTSTKYTRDICKEL). A helical membrane pass occupies residues 55-75 (LISLVASLFMGFGVLFLLLWV). The Lumenal segment spans residues 76 to 79 (GIYV).

The protein belongs to the OST5 family. As to quaternary structure, component of the oligosaccharyltransferase (OST) complex. OST exists in two different complex forms which contain common core subunits RPN1, RPN2, OST48, OST4, DAD1 and TMEM258, either STT3A or STT3B as catalytic subunits, and form-specific accessory subunits. STT3A complex assembly occurs through the formation of 3 subcomplexes. Subcomplex 1 contains RPN1 and TMEM258, subcomplex 2 contains the STT3A-specific subunits STT3A, DC2/OSTC, and KCP2 as well as the core subunit OST4, and subcomplex 3 contains RPN2, DAD1, and OST48. The STT3A complex can form stable complexes with the Sec61 complex or with both the Sec61 and TRAP complexes.

It localises to the membrane. The protein resides in the endoplasmic reticulum. The protein localises to the cytoplasm. It functions in the pathway protein modification; protein glycosylation. Subunit of the oligosaccharyl transferase (OST) complex that catalyzes the initial transfer of a defined glycan (Glc(3)Man(9)GlcNAc(2) in eukaryotes) from the lipid carrier dolichol-pyrophosphate to an asparagine residue within an Asn-X-Ser/Thr consensus motif in nascent polypeptide chains, the first step in protein N-glycosylation. N-glycosylation occurs cotranslationally and the complex associates with the Sec61 complex at the channel-forming translocon complex that mediates protein translocation across the endoplasmic reticulum (ER). All subunits are required for a maximal enzyme activity. This chain is Dolichyl-diphosphooligosaccharide--protein glycosyltransferase subunit TMEM258, found in Canis lupus familiaris (Dog).